A 282-amino-acid chain; its full sequence is tRNA pseudouridine synthase A (282 aa).

The active-site Nucleophile is the Asp53. Tyr119 is a substrate binding site.

This sequence belongs to the tRNA pseudouridine synthase TruA family. In terms of assembly, homodimer.

The catalysed reaction is uridine(38/39/40) in tRNA = pseudouridine(38/39/40) in tRNA. In terms of biological role, formation of pseudouridine at positions 38, 39 and 40 in the anticodon stem and loop of transfer RNAs. This is tRNA pseudouridine synthase A from Corynebacterium efficiens (strain DSM 44549 / YS-314 / AJ 12310 / JCM 11189 / NBRC 100395).